The primary structure comprises 209 residues: N-(5'-phosphoribosyl)anthranilate isomerase (209 aa).

This sequence belongs to the TrpF family.

It catalyses the reaction N-(5-phospho-beta-D-ribosyl)anthranilate = 1-(2-carboxyphenylamino)-1-deoxy-D-ribulose 5-phosphate. It participates in amino-acid biosynthesis; L-tryptophan biosynthesis; L-tryptophan from chorismate: step 3/5. The sequence is that of N-(5'-phosphoribosyl)anthranilate isomerase from Pyrobaculum islandicum (strain DSM 4184 / JCM 9189 / GEO3).